The chain runs to 334 residues: UDP-N-acetylglucosamine--N-acetylmuramyl-(pentapeptide) pyrophosphoryl-undecaprenol N-acetylglucosamine transferase (334 aa).

UDP-N-acetyl-alpha-D-glucosamine contacts are provided by residues 11-13 (TGG), Asn125, Ser185, Ile229, and Gln274.

This sequence belongs to the glycosyltransferase 28 family. MurG subfamily.

It is found in the cell inner membrane. The enzyme catalyses di-trans,octa-cis-undecaprenyl diphospho-N-acetyl-alpha-D-muramoyl-L-alanyl-D-glutamyl-meso-2,6-diaminopimeloyl-D-alanyl-D-alanine + UDP-N-acetyl-alpha-D-glucosamine = di-trans,octa-cis-undecaprenyl diphospho-[N-acetyl-alpha-D-glucosaminyl-(1-&gt;4)]-N-acetyl-alpha-D-muramoyl-L-alanyl-D-glutamyl-meso-2,6-diaminopimeloyl-D-alanyl-D-alanine + UDP + H(+). Its pathway is cell wall biogenesis; peptidoglycan biosynthesis. Its function is as follows. Cell wall formation. Catalyzes the transfer of a GlcNAc subunit on undecaprenyl-pyrophosphoryl-MurNAc-pentapeptide (lipid intermediate I) to form undecaprenyl-pyrophosphoryl-MurNAc-(pentapeptide)GlcNAc (lipid intermediate II). This chain is UDP-N-acetylglucosamine--N-acetylmuramyl-(pentapeptide) pyrophosphoryl-undecaprenol N-acetylglucosamine transferase, found in Thermosipho melanesiensis (strain DSM 12029 / CIP 104789 / BI429).